Consider the following 477-residue polypeptide: Argininosuccinate lyase (477 aa).

This sequence belongs to the lyase 1 family. Argininosuccinate lyase subfamily.

It localises to the cytoplasm. It catalyses the reaction 2-(N(omega)-L-arginino)succinate = fumarate + L-arginine. The protein operates within amino-acid biosynthesis; L-arginine biosynthesis; L-arginine from L-ornithine and carbamoyl phosphate: step 3/3. This Corynebacterium efficiens (strain DSM 44549 / YS-314 / AJ 12310 / JCM 11189 / NBRC 100395) protein is Argininosuccinate lyase.